Consider the following 153-residue polypeptide: Ribonuclease H (153 aa).

The RNase H type-1 domain occupies 7 to 148 (PADLVEMWTD…ADMLANQGVA (142 aa)). The Mg(2+) site is built by Asp-16, Glu-54, Asp-76, and Asp-140.

This sequence belongs to the RNase H family. As to quaternary structure, monomer. The cofactor is Mg(2+).

The protein localises to the cytoplasm. It carries out the reaction Endonucleolytic cleavage to 5'-phosphomonoester.. Endonuclease that specifically degrades the RNA of RNA-DNA hybrids. This Bordetella avium (strain 197N) protein is Ribonuclease H.